The chain runs to 262 residues: Glucosamine-6-phosphate deaminase (262 aa).

Aspartate 63 serves as the catalytic Proton acceptor; for enolization step. The For ring-opening step role is filled by asparagine 129. Histidine 131 acts as the Proton acceptor; for ring-opening step in catalysis. The For ring-opening step role is filled by glutamate 136.

This sequence belongs to the glucosamine/galactosamine-6-phosphate isomerase family. NagB subfamily.

The enzyme catalyses alpha-D-glucosamine 6-phosphate + H2O = beta-D-fructose 6-phosphate + NH4(+). It participates in amino-sugar metabolism; N-acetylneuraminate degradation; D-fructose 6-phosphate from N-acetylneuraminate: step 5/5. In terms of biological role, catalyzes the reversible isomerization-deamination of glucosamine 6-phosphate (GlcN6P) to form fructose 6-phosphate (Fru6P) and ammonium ion. The protein is Glucosamine-6-phosphate deaminase of Bacillus cereus (strain B4264).